Consider the following 608-residue polypeptide: Auxin response factor 3 (608 aa).

The tract at residues 1–40 (MGGLIDLNVMETEEDETQTQTPSSASGSVSPTSSSSASVS) is disordered. Positions 18–40 (QTQTPSSASGSVSPTSSSSASVS) are enriched in low complexity. The TF-B3 DNA-binding region spans 159–261 (FCKTLTASDT…KLRLGVRRAS (103 aa)).

This sequence belongs to the ARF family. Homo and heterodimers. In terms of tissue distribution, expressed in the whole plant.

Its subcellular location is the nucleus. Functionally, auxin response factors (ARFs) are transcriptional factors that bind specifically to the DNA sequence 5'-TGTCTC-3' found in the auxin-responsive promoter elements (AuxREs). Could act as transcriptional activator or repressor. Formation of heterodimers with Aux/IAA proteins may alter their ability to modulate early auxin response genes expression. Involved in the establishment or elaboration of tissue patterning during gynoecial development. The chain is Auxin response factor 3 (ARF3) from Arabidopsis thaliana (Mouse-ear cress).